A 210-amino-acid chain; its full sequence is Glutathione S-transferase 2 (210 aa).

A GST N-terminal domain is found at 1–80 (MDFYYLPLSA…YLVEKYGKQN (80 aa)). Glutathione is bound by residues serine 9, 50-52 (HTI), and 64-66 (ESR). In terms of domain architecture, GST C-terminal spans 87–208 (CPKKRALINQ…AGCLEMKKYF (122 aa)).

Belongs to the GST superfamily. Theta family. Homodimer.

It catalyses the reaction RX + glutathione = an S-substituted glutathione + a halide anion + H(+). Conjugation of reduced glutathione to a wide number of exogenous and endogenous hydrophobic electrophiles. This is Glutathione S-transferase 2 (Gst2) from Musca domestica (House fly).